The following is a 346-amino-acid chain: Uroporphyrinogen decarboxylase (346 aa).

Substrate-binding positions include 21-25 (RQAGR), Asp-71, Tyr-146, Ser-201, and His-316.

This sequence belongs to the uroporphyrinogen decarboxylase family. As to quaternary structure, homodimer.

The protein localises to the cytoplasm. The enzyme catalyses uroporphyrinogen III + 4 H(+) = coproporphyrinogen III + 4 CO2. It functions in the pathway porphyrin-containing compound metabolism; protoporphyrin-IX biosynthesis; coproporphyrinogen-III from 5-aminolevulinate: step 4/4. Its function is as follows. Catalyzes the decarboxylation of four acetate groups of uroporphyrinogen-III to yield coproporphyrinogen-III. This is Uroporphyrinogen decarboxylase from Rickettsia massiliae (strain Mtu5).